The chain runs to 205 residues: Cytochrome c biogenesis ATP-binding export protein CcmA (205 aa).

The 203-residue stretch at 2-204 (LEVSNLTAIR…SPKLRKIKLG (203 aa)) folds into the ABC transporter domain. 34–41 (GRNGTGKT) contacts ATP.

Belongs to the ABC transporter superfamily. CcmA exporter (TC 3.A.1.107) family. The complex is composed of two ATP-binding proteins (CcmA) and two transmembrane proteins (CcmB).

Its subcellular location is the cell inner membrane. The enzyme catalyses heme b(in) + ATP + H2O = heme b(out) + ADP + phosphate + H(+). Part of the ABC transporter complex CcmAB involved in the biogenesis of c-type cytochromes; once thought to export heme, this seems not to be the case, but its exact role is uncertain. Responsible for energy coupling to the transport system. The polypeptide is Cytochrome c biogenesis ATP-binding export protein CcmA (Vibrio vulnificus (strain YJ016)).